A 357-amino-acid polypeptide reads, in one-letter code: MYRILVINPGSSSTKVAVFEDEKKIAEKNLTHSAEELKKFKKSIDQEPLRRKAVEDFIDEVGYRIEDFSAIAARGGVLEPVPGGTYVVDEYMVDYLINRSPVDHVSNLAAVISYKLGKPYGIPCFVVDPVSVDEMCDEARFSGIPEIERKSYSHALNIKAVLRKVSREMGKTPEEVKIVVAHLGSGISVCACKNGKIIDVNNANDEGPFSIERTGELPVGDVVKTAYSSKHSAAELKEEFTKKGGLLAYLGTKDLRKALDSMETSRKAKLVVEAMAYQIAKEIGGMCAVLGDKPDAIVITGGMAHENRFVRMITDYIEKFGKVEVIPGELEMEALALGVLRVLRGEEKAKDYRSVIE.

Belongs to the acetokinase family.

It is found in the cytoplasm. It carries out the reaction butanoate + ATP = butanoyl phosphate + ADP. This is Probable butyrate kinase from Thermotoga petrophila (strain ATCC BAA-488 / DSM 13995 / JCM 10881 / RKU-1).